A 723-amino-acid polypeptide reads, in one-letter code: Catalase-peroxidase (723 aa).

Residues 97-225 constitute a cross-link (tryptophyl-tyrosyl-methioninium (Trp-Tyr) (with M-251)); it reads WHAAGSYRVT…LAAVQMGLIY (129 aa). His98 functions as the Proton acceptor in the catalytic mechanism. The segment at residues 225-251 is a cross-link (tryptophyl-tyrosyl-methioninium (Tyr-Met) (with W-97)); it reads YVNPEGVNGKSDPLATAAQMRETFARM. His266 lines the heme b pocket.

This sequence belongs to the peroxidase family. Peroxidase/catalase subfamily. Homodimer or homotetramer. Heme b serves as cofactor. Formation of the three residue Trp-Tyr-Met cross-link is important for the catalase, but not the peroxidase activity of the enzyme.

It catalyses the reaction H2O2 + AH2 = A + 2 H2O. The enzyme catalyses 2 H2O2 = O2 + 2 H2O. In terms of biological role, bifunctional enzyme with both catalase and broad-spectrum peroxidase activity. This is Catalase-peroxidase from Agrobacterium fabrum (strain C58 / ATCC 33970) (Agrobacterium tumefaciens (strain C58)).